Reading from the N-terminus, the 73-residue chain is Cell division protein ZapB (73 aa).

Residues 3–66 (LELLSQLETK…SWSDKVNGLV (64 aa)) are a coiled coil.

This sequence belongs to the ZapB family. In terms of assembly, homodimer. The ends of the coiled-coil dimer bind to each other, forming polymers. Interacts with FtsZ.

Its subcellular location is the cytoplasm. Functionally, non-essential, abundant cell division factor that is required for proper Z-ring formation. It is recruited early to the divisome by direct interaction with FtsZ, stimulating Z-ring assembly and thereby promoting cell division earlier in the cell cycle. Its recruitment to the Z-ring requires functional FtsA or ZipA. The polypeptide is Cell division protein ZapB (Shewanella frigidimarina (strain NCIMB 400)).